A 358-amino-acid polypeptide reads, in one-letter code: WAT1-related protein At3g28080 (358 aa).

The next 10 helical transmembrane spans lie at 12–32 (AVFL…STLF), 42–62 (IYPF…PSLF), 81–101 (IGLL…GIEY), 105–125 (TLAS…AVIF), 137–157 (SVAK…VIFY), 187–207 (WLIG…SFIL), 219–239 (FTVS…IGLV), 245–265 (PSIW…TGII), 283–303 (LYLA…GTIF), and 308–328 (LYLG…VVMW). The 129-residue stretch at 27–155 (GLSTLFKVAT…LSLIGAFVVI (129 aa)) folds into the EamA domain.

It belongs to the drug/metabolite transporter (DMT) superfamily. Plant drug/metabolite exporter (P-DME) (TC 2.A.7.4) family.

The protein resides in the membrane. In Arabidopsis thaliana (Mouse-ear cress), this protein is WAT1-related protein At3g28080.